The chain runs to 71 residues: Small, acid-soluble spore protein I (71 aa).

The protein belongs to the SspI family.

The protein localises to the spore core. The chain is Small, acid-soluble spore protein I from Geobacillus sp. (strain WCH70).